Consider the following 156-residue polypeptide: 6,7-dimethyl-8-ribityllumazine synthase (156 aa).

5-amino-6-(D-ribitylamino)uracil-binding positions include Phe-23, 57–59 (AYE), and 81–83 (AII). 86–87 (GT) serves as a coordination point for (2S)-2-hydroxy-3-oxobutyl phosphate. His-89 acts as the Proton donor in catalysis. Phe-114 provides a ligand contact to 5-amino-6-(D-ribitylamino)uracil. Arg-128 is a binding site for (2S)-2-hydroxy-3-oxobutyl phosphate.

This sequence belongs to the DMRL synthase family.

It carries out the reaction (2S)-2-hydroxy-3-oxobutyl phosphate + 5-amino-6-(D-ribitylamino)uracil = 6,7-dimethyl-8-(1-D-ribityl)lumazine + phosphate + 2 H2O + H(+). It functions in the pathway cofactor biosynthesis; riboflavin biosynthesis; riboflavin from 2-hydroxy-3-oxobutyl phosphate and 5-amino-6-(D-ribitylamino)uracil: step 1/2. Catalyzes the formation of 6,7-dimethyl-8-ribityllumazine by condensation of 5-amino-6-(D-ribitylamino)uracil with 3,4-dihydroxy-2-butanone 4-phosphate. This is the penultimate step in the biosynthesis of riboflavin. The protein is 6,7-dimethyl-8-ribityllumazine synthase of Helicobacter pylori (strain Shi470).